A 59-amino-acid polypeptide reads, in one-letter code: Small, acid-soluble spore protein H 1 (59 aa).

It belongs to the SspH family.

The protein localises to the spore core. The chain is Small, acid-soluble spore protein H 1 (sspH1) from Bacillus anthracis.